The sequence spans 109 residues: MAQDSKILEELYTVIASRKGTDPDKSYTAKLFARGRGKIAQKFGEEAVETVVAALSEGKDELVGESADTLYHLLVLWADCGVEPAKVWAELARRTGTSGIDEKKSRAKK.

It belongs to the PRA-PH family.

Its subcellular location is the cytoplasm. The catalysed reaction is 1-(5-phospho-beta-D-ribosyl)-ATP + H2O = 1-(5-phospho-beta-D-ribosyl)-5'-AMP + diphosphate + H(+). It participates in amino-acid biosynthesis; L-histidine biosynthesis; L-histidine from 5-phospho-alpha-D-ribose 1-diphosphate: step 2/9. This is Phosphoribosyl-ATP pyrophosphatase from Paramagnetospirillum magneticum (strain ATCC 700264 / AMB-1) (Magnetospirillum magneticum).